Reading from the N-terminus, the 219-residue chain is Ribose-5-phosphate isomerase A (219 aa).

Residues 28–31, 81–84, and 94–97 contribute to the substrate site; these read TGST, DGAD, and KGGG. Residue Glu103 is the Proton acceptor of the active site. Lys121 serves as a coordination point for substrate.

This sequence belongs to the ribose 5-phosphate isomerase family. Homodimer.

It carries out the reaction aldehydo-D-ribose 5-phosphate = D-ribulose 5-phosphate. Its pathway is carbohydrate degradation; pentose phosphate pathway; D-ribose 5-phosphate from D-ribulose 5-phosphate (non-oxidative stage): step 1/1. In terms of biological role, catalyzes the reversible conversion of ribose-5-phosphate to ribulose 5-phosphate. This is Ribose-5-phosphate isomerase A from Shewanella sp. (strain MR-4).